The sequence spans 248 residues: tRNA (guanine-N(1)-)-methyltransferase (248 aa).

Residues Gly126 and 150-155 (LGDYVL) each bind S-adenosyl-L-methionine. Positions 224 to 248 (WRRTQQEERTRERRPDLWAAFDSED) are disordered. The segment covering 227–239 (TQQEERTRERRPD) has biased composition (basic and acidic residues).

It belongs to the RNA methyltransferase TrmD family. In terms of assembly, homodimer.

Its subcellular location is the cytoplasm. It catalyses the reaction guanosine(37) in tRNA + S-adenosyl-L-methionine = N(1)-methylguanosine(37) in tRNA + S-adenosyl-L-homocysteine + H(+). Specifically methylates guanosine-37 in various tRNAs. The sequence is that of tRNA (guanine-N(1)-)-methyltransferase from Micrococcus luteus (strain ATCC 4698 / DSM 20030 / JCM 1464 / CCM 169 / CCUG 5858 / IAM 1056 / NBRC 3333 / NCIMB 9278 / NCTC 2665 / VKM Ac-2230) (Micrococcus lysodeikticus).